The chain runs to 623 residues: Kelch-like protein diablo (623 aa).

The segment at 1–54 (MGDLPGSGSTAQPRDAAVTGTGGNSTAGGGSSVGSTAVDRPPSPARLSHTSEKH) is disordered. Threonine 19 is modified (phosphothreonine). Residues 20–32 (GTGGNSTAGGGSS) are compositionally biased toward gly residues. The 68-residue stretch at 72-139 (CDVVLNVGGR…CYTAHIIVEE (68 aa)) folds into the BTB domain. Residues 174-276 (CLGIRAFADT…SPKFLVGTVG (103 aa)) form the BACK domain. 6 Kelch repeats span residues 323–369 (VLFA…VLND), 371–417 (LYAV…VLDG), 418–464 (FLYA…VLGG), 466–511 (LYAI…VFNN), 513–558 (IYAV…VVNG), and 559–605 (QLYA…VMRA).

It participates in protein modification; protein ubiquitination. Its function is as follows. Probable substrate-specific adapter of an E3 ubiquitin-protein ligase complex which mediates the ubiquitination and subsequent proteasomal degradation of target proteins. May have a role in synapse differentiation and growth. This is Kelch-like protein diablo from Drosophila melanogaster (Fruit fly).